A 355-amino-acid chain; its full sequence is Chemerin-like receptor 2 (355 aa).

Residues 1–41 (MEDLEETLFEEFENYSYALDYYSLESDLEEKVQLGVVHWVS) lie on the Extracellular side of the membrane. Residue Asn-14 is glycosylated (N-linked (GlcNAc...) asparagine). Residues 42–62 (LVLYCLSFVLGIPGNAIVIWF) form a helical membrane-spanning segment. The Cytoplasmic segment spans residues 63–73 (TGFKWKKTVST). Residues 74-94 (LWFLNLAIADFIFLLFLPLYI) form a helical membrane-spanning segment. Residues 95–112 (SYVVMNFHWPFGIWLCKA) lie on the Extracellular side of the membrane. A disulfide bridge links Cys-110 with Cys-187. Residues 113–133 (NSFTAQLNMFASVFFLTVISL) form a helical membrane-spanning segment. The Cytoplasmic portion of the chain corresponds to 134 to 154 (DHYIHLIHPVLSHRHRTLKNS). A helical membrane pass occupies residues 155-175 (LIVIIFIWLLASLIGGPALYF). At 176–210 (RDTVEFNNHTLCYNNFQKHDPDLTVIRHHVLTWVK) the chain is on the extracellular side. The helical transmembrane segment at 211-231 (FIVGYLFPLLTMSICYLCLIF) threads the bilayer. The Cytoplasmic portion of the chain corresponds to 232–247 (KVKKRSILISSRHFWT). A helical transmembrane segment spans residues 248–268 (ILAVVVAFVVCWTPYHLFSIW). Topologically, residues 269 to 286 (ELTIHHNSYSHHVMQAGI) are extracellular. Residues 287 to 307 (PLSTGLAFLNSCLNPILYVLI) traverse the membrane as a helical segment. Topologically, residues 308-355 (SKKFQARFRSSVAEILKYTLWEVSCSGTVSEQLRNSETKNLCLLETAQ) are cytoplasmic.

The protein belongs to the chemokine-like receptor (CMKLR) family.

It localises to the cell membrane. In terms of biological role, receptor for chemoattractant adipokine chemerin/RARRES2 suggesting a role for this receptor in the regulation of inflammation and energy homesotasis. Signals mainly via beta-arrestin pathway. Binding of RARRES2 activates weakly G proteins, calcium mobilization and MAPK1/MAPK3 (ERK1/2) phosphorylation too. Acts also as a receptor for TAFA1, mediates its effects on neuronal stem-cell proliferation and differentiation via the activation of ROCK/ERK and ROCK/STAT3 signaling pathway. The chain is Chemerin-like receptor 2 (CMKLR2) from Macaca mulatta (Rhesus macaque).